We begin with the raw amino-acid sequence, 151 residues long: Ribonuclease H (151 aa).

The region spanning 1–141 (MKHVDIFTDG…ADELARRGME (141 aa)) is the RNase H type-1 domain. Residues aspartate 9, glutamate 47, aspartate 69, and aspartate 133 each contribute to the Mg(2+) site.

The protein belongs to the RNase H family. Monomer. Mg(2+) serves as cofactor.

The protein localises to the cytoplasm. The enzyme catalyses Endonucleolytic cleavage to 5'-phosphomonoester.. Endonuclease that specifically degrades the RNA of RNA-DNA hybrids. The sequence is that of Ribonuclease H from Rhizobium etli (strain ATCC 51251 / DSM 11541 / JCM 21823 / NBRC 15573 / CFN 42).